The following is a 284-amino-acid chain: MEMO1 family protein Saci_0089 (284 aa).

Belongs to the MEMO1 family.

This is MEMO1 family protein Saci_0089 from Sulfolobus acidocaldarius (strain ATCC 33909 / DSM 639 / JCM 8929 / NBRC 15157 / NCIMB 11770).